We begin with the raw amino-acid sequence, 237 residues long: Carboxy-S-adenosyl-L-methionine synthase (237 aa).

Residues Tyr40, 65 to 67 (GCS), 116 to 117 (DI), Asn131, and Arg194 each bind S-adenosyl-L-methionine.

The protein belongs to the class I-like SAM-binding methyltransferase superfamily. Cx-SAM synthase family. Homodimer.

The enzyme catalyses prephenate + S-adenosyl-L-methionine = carboxy-S-adenosyl-L-methionine + 3-phenylpyruvate + H2O. Its function is as follows. Catalyzes the conversion of S-adenosyl-L-methionine (SAM) to carboxy-S-adenosyl-L-methionine (Cx-SAM). This chain is Carboxy-S-adenosyl-L-methionine synthase, found in Dichelobacter nodosus (strain VCS1703A).